A 153-amino-acid polypeptide reads, in one-letter code: Small ribosomal subunit protein uS13 (153 aa).

The interval 129 to 153 (RGQRTKSTFRHGSSVGVSRTRPTGN) is disordered. Residues 143 to 153 (VGVSRTRPTGN) show a composition bias toward polar residues.

Belongs to the universal ribosomal protein uS13 family. In terms of assembly, part of the 30S ribosomal subunit. Forms a loose heterodimer with protein S19. Forms two bridges to the 50S subunit in the 70S ribosome.

Located at the top of the head of the 30S subunit, it contacts several helices of the 16S rRNA. In the 70S ribosome it contacts the 23S rRNA (bridge B1a) and protein L5 of the 50S subunit (bridge B1b), connecting the 2 subunits; these bridges are implicated in subunit movement. The protein is Small ribosomal subunit protein uS13 of Methanosphaera stadtmanae (strain ATCC 43021 / DSM 3091 / JCM 11832 / MCB-3).